Reading from the N-terminus, the 2094-residue chain is Protein Ycf2 (2094 aa).

Residue 1385–1392 (GPPETGRS) coordinates ATP.

This sequence belongs to the Ycf2 family.

It localises to the plastid. It is found in the chloroplast stroma. In terms of biological role, probable ATPase of unknown function. Its presence in a non-photosynthetic plant (Epifagus virginiana) and experiments in tobacco indicate that it has an essential function which is probably not related to photosynthesis. The chain is Protein Ycf2 from Huperzia lucidula (Shining clubmoss).